Consider the following 325-residue polypeptide: UPF0285 protein MmarC7_1666 (325 aa).

The protein belongs to the UPF0285 family.

The sequence is that of UPF0285 protein MmarC7_1666 from Methanococcus maripaludis (strain C7 / ATCC BAA-1331).